We begin with the raw amino-acid sequence, 174 residues long: Small ribosomal subunit protein uS5 (174 aa).

The S5 DRBM domain maps to 19–82 (LREKMVAINR…DEARRKMVKV (64 aa)).

This sequence belongs to the universal ribosomal protein uS5 family. Part of the 30S ribosomal subunit. Contacts proteins S4 and S8.

With S4 and S12 plays an important role in translational accuracy. Its function is as follows. Located at the back of the 30S subunit body where it stabilizes the conformation of the head with respect to the body. In Azoarcus sp. (strain BH72), this protein is Small ribosomal subunit protein uS5.